The chain runs to 312 residues: Urease accessory protein UreD (312 aa).

The span at 1–15 (MLAEQFTDKNKHAEQ) shows a compositional bias: basic and acidic residues. The tract at residues 1–24 (MLAEQFTDKNKHAEQELSPGSSAV) is disordered.

Belongs to the UreD family. As to quaternary structure, ureD, UreF and UreG form a complex that acts as a GTP-hydrolysis-dependent molecular chaperone, activating the urease apoprotein by helping to assemble the nickel containing metallocenter of UreC. The UreE protein probably delivers the nickel.

The protein resides in the cytoplasm. Its function is as follows. Required for maturation of urease via the functional incorporation of the urease nickel metallocenter. This Hahella chejuensis (strain KCTC 2396) protein is Urease accessory protein UreD.